The following is a 365-amino-acid chain: Mitogen-activated protein kinase HOG1 (365 aa).

A Protein kinase domain is found at 20–306 (YSDLQPVGMG…ATNALAHEYL (287 aa)). ATP-binding positions include 26-34 (VGMGAFGLV) and K49. The active-site Proton acceptor is D148. A TXY motif is present at residues 178-180 (TGY).

The protein belongs to the protein kinase superfamily. Ser/Thr protein kinase family. MAP kinase subfamily. HOG1 sub-subfamily. Mg(2+) serves as cofactor.

It is found in the cytoplasm. It localises to the nucleus. It carries out the reaction L-seryl-[protein] + ATP = O-phospho-L-seryl-[protein] + ADP + H(+). It catalyses the reaction L-threonyl-[protein] + ATP = O-phospho-L-threonyl-[protein] + ADP + H(+). In terms of biological role, proline-directed serine/threonine-protein kinase involved in a signal transduction pathway that is activated by changes in the osmolarity of the extracellular environment. Controls osmotic regulation of transcription of target genes. Involved in environmental stress response, hyphal growth, conidiation and possibly secondary metabolism such as ustiloxin biosynthesis or the biosynthesis of other phytotoxic compounds that are inhibitory to rice shoot growth during seed germination. Plays a key role in responses to cell wall and membrane stresses but not oxidative stress. In Ustilaginoidea virens (Rice false smut fungus), this protein is Mitogen-activated protein kinase HOG1.